The sequence spans 503 residues: D-alanine--D-alanyl carrier protein ligase (503 aa).

Residue Thr151–Ser152 coordinates ATP. Residue Asp196 coordinates D-alanine. Residue Asn291–Thr296 participates in ATP binding. Val300 contributes to the D-alanine binding site. Residues Asp382, Tyr393 to Arg396, and Lys491 contribute to the ATP site. Lys491 is a binding site for D-alanine.

This sequence belongs to the ATP-dependent AMP-binding enzyme family. DltA subfamily.

It is found in the cytoplasm. It carries out the reaction holo-[D-alanyl-carrier protein] + D-alanine + ATP = D-alanyl-[D-alanyl-carrier protein] + AMP + diphosphate. Its pathway is cell wall biogenesis; lipoteichoic acid biosynthesis. In terms of biological role, catalyzes the first step in the D-alanylation of lipoteichoic acid (LTA), the activation of D-alanine and its transfer onto the D-alanyl carrier protein (Dcp) DltC. In an ATP-dependent two-step reaction, forms a high energy D-alanyl-AMP intermediate, followed by transfer of the D-alanyl residue as a thiol ester to the phosphopantheinyl prosthetic group of the Dcp. D-alanylation of LTA plays an important role in modulating the properties of the cell wall in Gram-positive bacteria, influencing the net charge of the cell wall. The polypeptide is D-alanine--D-alanyl carrier protein ligase (Bacillus anthracis (strain A0248)).